Consider the following 91-residue polypeptide: Molybdopterin synthase sulfur carrier subunit (91 aa).

Gly-91 carries the post-translational modification 1-thioglycine; alternate. A Glycyl adenylate; alternate modification is found at Gly-91.

The protein belongs to the MoaD family. MOCS2A subfamily. In terms of assembly, heterotetramer; composed of 2 small (MOCS2A) and 2 large (MOCS2B) subunits. C-terminal thiocarboxylation occurs in 2 steps, it is first acyl-adenylated (-COAMP) via the hesA/moeB/thiF part of uba4, then thiocarboxylated (-COSH) via the rhodanese domain of uba4.

It is found in the cytoplasm. It participates in cofactor biosynthesis; molybdopterin biosynthesis. In terms of biological role, acts as a sulfur carrier required for molybdopterin biosynthesis. Component of the molybdopterin synthase complex that catalyzes the conversion of precursor Z into molybdopterin by mediating the incorporation of 2 sulfur atoms into precursor Z to generate a dithiolene group. In the complex, serves as sulfur donor by being thiocarboxylated (-COSH) at its C-terminus by uba4. After interaction with MOCS2B, the sulfur is then transferred to precursor Z to form molybdopterin. The protein is Molybdopterin synthase sulfur carrier subunit of Emericella nidulans (strain FGSC A4 / ATCC 38163 / CBS 112.46 / NRRL 194 / M139) (Aspergillus nidulans).